The sequence spans 435 residues: MGYAMRLALIDGEHYPDVNRWALEKLKVDCAVFVGGMEKIGSIRDVERTLSIKLYYDEDIFKALERAIEENEIREVIDLSDEPVLTPEIRFRIASFLLKRGITYIGADFEFKPKEWIKIDVPSINIIGTGKRIGKTAIGGFVGRTLKEEYKVVIVTMGRGGPESPEVIRGDLMEITPEFLVEVSEKGRHAASDHFEDALTAGVATVGCRRCGGGLAGFTFLDVLQKGIEVAKSLNPEIIVFEGSGASFANVLSEGFITVVSALQGKEIKMYLYPLRISLGDLIVVTMADEVKDPGKISSLIKEINPDADIHLTRFSPRLIGNVEGKAVVVTTSTNSAKRVTKELEDRGIDVVGFSGNLANRVKLREELKKVSYDTLIVELKAGAVDVAIKSALRSGKRIVFLDYEPKNIDDKDLRESVKELARRIVNDKGHRKGR.

The protein belongs to the cyclic 2,3-diphosphoglycerate synthetase family.

The protein resides in the cytoplasm. The catalysed reaction is (2R)-2,3-bisphosphoglycerate + ATP + H(+) = cyclic (2R)-2,3-bisphosphoglycerate + ADP + phosphate. Its function is as follows. Catalyzes the formation of cyclic 2,3-diphosphoglycerate (cDPG) by formation of an intramolecular phosphoanhydride bond at the expense of ATP. The polypeptide is Cyclic 2,3-diphosphoglycerate synthetase (Pyrococcus horikoshii (strain ATCC 700860 / DSM 12428 / JCM 9974 / NBRC 100139 / OT-3)).